We begin with the raw amino-acid sequence, 669 residues long: Diacylglycerol lipase-beta (669 aa).

At 1–17 the chain is on the cytoplasmic side; that stretch reads MPGMVLFGRRWSLASDD. The helical transmembrane segment at 18–38 threads the bilayer; sequence LVFPGSFELFLRVLWWIVSLT. Over 39-58 the chain is Extracellular; the sequence is LYLTHRRRLDCPGGVLLSTY. A helical membrane pass occupies residues 59–79; that stretch reads LIVLLVLLAVIICTVLAIVCV. Topologically, residues 80-102 are cytoplasmic; the sequence is SMRGTICNPGPRKSMSKLLYIRL. The helical transmembrane segment at 103–123 threads the bilayer; sequence ALFLPEMVWASLGAAWVAKGI. Residues 124 to 128 lie on the Extracellular side of the membrane; it reads QCDRT. The chain crosses the membrane as a helical span at residues 129–149; sequence VVIGIIATVIVSWIVIAATMV. Over 150–669 the chain is Cytoplasmic; sequence TIIFVFDPLG…CPGQGGSSVP (520 aa). Residues Ser-443 and Asp-495 each act as charge relay system in the active site. Phosphoserine occurs at positions 570, 578, and 582.

Belongs to the AB hydrolase superfamily. Lipase family. The cofactor is Ca(2+). In terms of tissue distribution, expressed in liver and immune cells such as macrophages and microglias. In embryonic brains present in axonal tracts, while in adults localizes to dendritic fields, correlating with the developmental change in requirement for 2-AG synthesis from the pre- to the postsynaptic compartment (at protein level).

The protein resides in the cell membrane. It carries out the reaction a 1,2-diacyl-sn-glycerol + H2O = a 2-acylglycerol + a fatty acid + H(+). It catalyses the reaction 1-octadecanoyl-2-(5Z,8Z,11Z,14Z-eicosatetraenoyl)-sn-glycerol + H2O = 2-(5Z,8Z,11Z,14Z-eicosatetraenoyl)-glycerol + octadecanoate + H(+). The catalysed reaction is 1,2-di-(9Z-octadecenoyl)-sn-glycerol + H2O = 2-(9Z-octadecenoyl)-glycerol + (9Z)-octadecenoate + H(+). The enzyme catalyses 1-(9Z-octadecenoyl)-2-(5Z,8Z,11Z,14Z-eicosatetraenoyl)-sn-glycerol + H2O = 2-(5Z,8Z,11Z,14Z-eicosatetraenoyl)-glycerol + (9Z)-octadecenoate + H(+). It carries out the reaction 1-(9Z-octadecenoyl)-2-octadecanoyl-sn-glycerol + H2O = 2-octadecanoylglycerol + (9Z)-octadecenoate + H(+). It catalyses the reaction 1-(9Z-octadecenoyl)-2-(9Z,12Z-octadecadienoyl)-sn-glycerol + H2O = 2-(9Z,12Z-octadecadienoyl)-glycerol + (9Z)-octadecenoate + H(+). The catalysed reaction is 1-(9Z-octadecenoyl)-2-O-(5Z,8Z,11Z,14Z-eicosatetraenyl)-sn-glycerol + H2O = 2-O-(5Z,8Z,11Z,14Z)-eicosatetraenylglycerol + (9Z)-octadecenoate + H(+). The enzyme catalyses a triacylglycerol + H2O = a diacylglycerol + a fatty acid + H(+). It carries out the reaction 1,2,3-tri-(5Z,8Z,11Z,14Z-eicosatetraenoyl)-glycerol + H2O = 1,2-di-(5Z,8Z,11Z,14Z-eicosatetraenoyl)-glycerol + (5Z,8Z,11Z,14Z)-eicosatetraenoate + H(+). It catalyses the reaction 1,2,3-(4Z,7Z,10Z,13Z,16Z,19Z-docosahexaenoyl)-glycerol + H2O = 1,2-di-(4Z,7Z,10Z,13Z,16Z,19Z-docosahexaenoyl)-glycerol + (4Z,7Z,10Z,13Z,16Z,19Z)-docosahexaenoate + H(+). Its activity is regulated as follows. Inhibited by the 1,2,3-triazole urea covalent inhibitors KT109 and KT172. Inhibited by p-hydroxy-mercuri-benzoate and HgCl(2), but not by PMSF. Also inhibited by RHC80267, a drug that blocks 2-AG formation. In terms of biological role, lipase that catalyzes the hydrolysis of arachidonic acid (AA)-esterified diacylglycerols (DAGs) to produce the principal endocannabinoid, 2-arachidonoylglycerol (2-AG) which can be further cleaved by downstream enzymes to release arachidonic acid (AA) for cyclooxygenase (COX)-mediated eicosanoid production. Preferentially hydrolyzes DAGs at the sn-1 position in a calcium-dependent manner and has negligible activity against other lipids including monoacylglycerols and phospholipids. Plays a key role in the regulation of 2-AG and AA pools utilized by COX1/2 to generate lipid mediators of macrophage and microglia inflammatory responses. Also functions as a polyunsaturated fatty acids-specific triacylglycerol lipase in macrophages. Plays an important role to support the metabolic and signaling demands of macrophages. The chain is Diacylglycerol lipase-beta (Daglb) from Mus musculus (Mouse).